We begin with the raw amino-acid sequence, 607 residues long: Elongation factor 4 (607 aa).

One can recognise a tr-type G domain in the interval 11–193; the sequence is EKIRNFSIIA…QIVEKVPAPT (183 aa). Residues 23–28 and 140–143 each bind GTP; these read DHGKST and NKID.

This sequence belongs to the TRAFAC class translation factor GTPase superfamily. Classic translation factor GTPase family. LepA subfamily.

The protein localises to the cell membrane. The enzyme catalyses GTP + H2O = GDP + phosphate + H(+). In terms of biological role, required for accurate and efficient protein synthesis under certain stress conditions. May act as a fidelity factor of the translation reaction, by catalyzing a one-codon backward translocation of tRNAs on improperly translocated ribosomes. Back-translocation proceeds from a post-translocation (POST) complex to a pre-translocation (PRE) complex, thus giving elongation factor G a second chance to translocate the tRNAs correctly. Binds to ribosomes in a GTP-dependent manner. This is Elongation factor 4 from Streptococcus pneumoniae (strain P1031).